Reading from the N-terminus, the 1419-residue chain is Multidrug resistance protein 1 (1419 aa).

The segment at 1-37 (MGKEQKEKKDGNLSIKEEVEKELNKKSTAELFRKIKN) is r domain; regulates transporter activity. Residues 1–60 (MGKEQKEKKDGNLSIKEEVEKELNKKSTAELFRKIKNEKISFFLPFKCLPAQHRKLLFIS) lie on the Cytoplasmic side of the membrane. An ABC transmembrane type-1 1 domain is found at 58–345 (FISFVCAVLS…ILPNITEYMK (288 aa)). A helical membrane pass occupies residues 61–81 (FVCAVLSGGTLPFFISVFGVI). At 82 to 90 (LKNMNLGDD) the chain is on the vacuolar side. The helical transmembrane segment at 91–111 (INPIILSLVSIGLVQFILSMI) threads the bilayer. Residues 112-168 (SSYCMDVITSKILKTLKLEYLRSVFYQDGQFHDNNPGSKLRSDLDFYLEQVSSGIGT) are Cytoplasmic-facing. The helical transmembrane segment at 169-189 (KFITIFTYASSFLGLYIWSLI) threads the bilayer. The Vacuolar segment spans residues 190–191 (KN). Residues 192-212 (ARLTLCITCVFPLIYVCGVIC) form a helical membrane-spanning segment. The Cytoplasmic segment spans residues 213–275 (NKKVKLNKKT…KYILKANFVE (63 aa)). Residues 276 to 296 (ALHIGLINGLILVSYAFGFWY) traverse the membrane as a helical segment. The Vacuolar segment spans residues 297 to 316 (GTRIIINSATNQYPNNDFNG). A helical membrane pass occupies residues 317-337 (ASVISILLGVLISMFMLTIIL). Residues 338 to 788 (PNITEYMKAL…YKEIFSYKKD (451 aa)) lie on the Cytoplasmic side of the membrane. Residues 378 to 662 (IEFKNVRFHY…NNNNNNNNNK (285 aa)) form the ABC transporter 1 domain. ATP contacts are provided by Tyr387, Thr389, Arg390, Ser415, Cys417, Gly418, Lys419, Ser420, Thr421, Gln462, Lys562, Ser564, Gly566, and Gln567. Gln462 serves as a coordination point for Mg(2+). Disordered regions lie at residues 639–665 (ERSD…KINN) and 697–752 (SSNK…TAEN). 2 stretches are compositionally biased toward low complexity: residues 643 to 665 (NNNN…KINN) and 697 to 715 (SSNK…NKSS). Residues 723-749 (GNDADNMNSLSIHENENISNNRNCKNT) are compositionally biased toward polar residues. A helical transmembrane segment spans residues 789–809 (VTIIFFSILVAGGLYPVFALL). The 293-residue stretch at 791–1083 (IIFFSILVAG…GSYAGKLMSL (293 aa)) folds into the ABC transmembrane type-1 2 domain. Residues 810–829 (YARYVSTLFDFANLEYNSNK) lie on the Vacuolar side of the membrane. The helical transmembrane segment at 830-850 (YSIYILLIAIAMFISETLKNY) threads the bilayer. Residues 851-907 (YNNKIGEKVEKTMKRRLFENILYQEMSFFDQDKNTPGVLSAHINRDVHLLKTGLVNN) lie on the Cytoplasmic side of the membrane. Transmembrane regions (helical) follow at residues 908-928 (IVIF…SFYF) and 929-949 (CPIV…VFAV). The Cytoplasmic portion of the chain corresponds to 950-1032 (RARLTKSKEI…RIIVNAALWG (83 aa)). The chain crosses the membrane as a helical span at residues 1033–1053 (FSQSAQLFINSFAYWFGSFLI). Residues 1054–1057 (KRGT) lie on the Vacuolar side of the membrane. A helical transmembrane segment spans residues 1058–1078 (ILVDDFMKSLFTFIFTGSYAG). Over 1079 to 1419 (KLMSLKGDSE…IYKKYVKLAK (341 aa)) the chain is Cytoplasmic. Positions 1126–1416 (VDIKDVNFRY…QDGIYKKYVK (291 aa)) constitute an ABC transporter 2 domain. ATP contacts are provided by Tyr1135, Arg1138, Thr1163, Gly1164, Gly1166, Lys1167, Ser1168, Thr1169, Gln1256, Leu1312, Ser1313, Gly1315, and Gln1316. Residue Ser1168 coordinates Mg(2+). Mg(2+) is bound at residue Gln1256.

This sequence belongs to the ABC transporter superfamily. ABCB family. Multidrug resistance exporter (TC 3.A.1.201) subfamily.

It is found in the vacuole membrane. The catalysed reaction is ATP + H2O + xenobioticSide 1 = ADP + phosphate + xenobioticSide 2.. Energy-dependent efflux pump responsible for decreased drug accumulation in multidrug-resistant cells. Transports lumefantrine, mefloquine, chloroquine, quinine, quinidine, amodiaquine, piperaquine, dihydroartemisinin and quinacrine. In Plasmodium falciparum (isolate 3D7), this protein is Multidrug resistance protein 1.